A 386-amino-acid chain; its full sequence is Dual-specificity RNA methyltransferase RlmN (386 aa).

The active-site Proton acceptor is Glu94. The Radical SAM core domain occupies 100 to 341; sequence EENRGTLCIS…VTTIRKTRGD (242 aa). Cys107 and Cys347 are disulfide-bonded. Positions 114, 118, and 121 each coordinate [4Fe-4S] cluster. Residues 173–174, Ser205, 227–229, and Asn304 contribute to the S-adenosyl-L-methionine site; these read GE and SLH. Cys347 functions as the S-methylcysteine intermediate in the catalytic mechanism.

This sequence belongs to the radical SAM superfamily. RlmN family. [4Fe-4S] cluster serves as cofactor.

The protein resides in the cytoplasm. It carries out the reaction adenosine(2503) in 23S rRNA + 2 reduced [2Fe-2S]-[ferredoxin] + 2 S-adenosyl-L-methionine = 2-methyladenosine(2503) in 23S rRNA + 5'-deoxyadenosine + L-methionine + 2 oxidized [2Fe-2S]-[ferredoxin] + S-adenosyl-L-homocysteine. The enzyme catalyses adenosine(37) in tRNA + 2 reduced [2Fe-2S]-[ferredoxin] + 2 S-adenosyl-L-methionine = 2-methyladenosine(37) in tRNA + 5'-deoxyadenosine + L-methionine + 2 oxidized [2Fe-2S]-[ferredoxin] + S-adenosyl-L-homocysteine. Its function is as follows. Specifically methylates position 2 of adenine 2503 in 23S rRNA and position 2 of adenine 37 in tRNAs. m2A2503 modification seems to play a crucial role in the proofreading step occurring at the peptidyl transferase center and thus would serve to optimize ribosomal fidelity. This Herminiimonas arsenicoxydans protein is Dual-specificity RNA methyltransferase RlmN.